The following is a 230-amino-acid chain: Ribose-5-phosphate isomerase A (230 aa).

Substrate-binding positions include 31–34, 87–90, and 100–103; these read TGST, DGAD, and KGGG. Residue Glu109 is the Proton acceptor of the active site. Lys127 is a substrate binding site.

Belongs to the ribose 5-phosphate isomerase family. As to quaternary structure, homodimer.

It catalyses the reaction aldehydo-D-ribose 5-phosphate = D-ribulose 5-phosphate. The protein operates within carbohydrate degradation; pentose phosphate pathway; D-ribose 5-phosphate from D-ribulose 5-phosphate (non-oxidative stage): step 1/1. Catalyzes the reversible conversion of ribose-5-phosphate to ribulose 5-phosphate. This chain is Ribose-5-phosphate isomerase A, found in Lactobacillus delbrueckii subsp. bulgaricus (strain ATCC 11842 / DSM 20081 / BCRC 10696 / JCM 1002 / NBRC 13953 / NCIMB 11778 / NCTC 12712 / WDCM 00102 / Lb 14).